A 310-amino-acid polypeptide reads, in one-letter code: MEFKHVSVLLDECINALNIKEDGIYVDCTLGGAGHSSEIVKRLSSDGRLIGFDQDKDALKAAGERLKDYKNVTYVHSNFYAIYDVLTDLGIDGVDGILMDLGVSSYQLDNGERGFSYMQDAPLDMRMNRENEFSAYEIVNTYSEEELYRIIKEYGEEKFAKRIASFIVKNREEKNIETTLELVEIIKAAIPAKARREGPHPAKRTFQAIRIEVNKELEIISKTILDGVKKLNKGGRMAIITFHSLEDRIVKNTFKELANPCTCPSEFPVCVCNRKPEVKLISRKPIEASKEELEFNPRSRSAKLRIIEKL.

S-adenosyl-L-methionine contacts are provided by residues 33–35 (AGH), Asp-53, Tyr-83, Asp-100, and Gln-107.

It belongs to the methyltransferase superfamily. RsmH family.

The protein resides in the cytoplasm. It catalyses the reaction cytidine(1402) in 16S rRNA + S-adenosyl-L-methionine = N(4)-methylcytidine(1402) in 16S rRNA + S-adenosyl-L-homocysteine + H(+). Specifically methylates the N4 position of cytidine in position 1402 (C1402) of 16S rRNA. The protein is Ribosomal RNA small subunit methyltransferase H of Clostridium perfringens (strain ATCC 13124 / DSM 756 / JCM 1290 / NCIMB 6125 / NCTC 8237 / Type A).